A 345-amino-acid chain; its full sequence is Probable dual-specificity RNA methyltransferase RlmN (345 aa).

E90 functions as the Proton acceptor in the catalytic mechanism. A Radical SAM core domain is found at 96-326 (YDYGNSICIS…STIRKEMGAD (231 aa)). C103 and C331 are oxidised to a cystine. Residues C110, C114, and C117 each coordinate [4Fe-4S] cluster. Residues 157–158 (GE), S189, 212–214 (SLH), and N288 each bind S-adenosyl-L-methionine. C331 acts as the S-methylcysteine intermediate in catalysis.

It belongs to the radical SAM superfamily. RlmN family. Requires [4Fe-4S] cluster as cofactor.

It is found in the cytoplasm. It carries out the reaction adenosine(2503) in 23S rRNA + 2 reduced [2Fe-2S]-[ferredoxin] + 2 S-adenosyl-L-methionine = 2-methyladenosine(2503) in 23S rRNA + 5'-deoxyadenosine + L-methionine + 2 oxidized [2Fe-2S]-[ferredoxin] + S-adenosyl-L-homocysteine. The catalysed reaction is adenosine(37) in tRNA + 2 reduced [2Fe-2S]-[ferredoxin] + 2 S-adenosyl-L-methionine = 2-methyladenosine(37) in tRNA + 5'-deoxyadenosine + L-methionine + 2 oxidized [2Fe-2S]-[ferredoxin] + S-adenosyl-L-homocysteine. Its function is as follows. Specifically methylates position 2 of adenine 2503 in 23S rRNA and position 2 of adenine 37 in tRNAs. The protein is Probable dual-specificity RNA methyltransferase RlmN of Clostridium acetobutylicum (strain ATCC 824 / DSM 792 / JCM 1419 / IAM 19013 / LMG 5710 / NBRC 13948 / NRRL B-527 / VKM B-1787 / 2291 / W).